Reading from the N-terminus, the 442-residue chain is MINAPVFRRVLALLGDLRLAILLLLVIAIASMAGTVIEQGQSLSFYQANYPENPALFGFLSWRVLLALGLDHVYRTPWYLTLLVLFGASLTACTLTRQVPALTTAQRWHYYQEPRQFTKLALSTTIPQGSLTALATALRAKGYRVWQTDTQLYARKGLVGRLGPIVVHASMLLILLGGILGALTGFMAQELIPSGETVHLQHIVEAGPLARIPQDWSVKVNRFWIDYTDAGEIDQFYSDLSIQDAKGQEVKRGTIHVNRPLRYGGVSLYQADWGIAAIRFRLNRSPVLQLPMAPLDTGGKGRLWGTWLPTRPDLSAGVSLIARDLQGTVLLYGPKGEFLTSLRTGMSTEVNGVTLTLVELVGSTGLQIKADPGIPLFYAGFALLMAGVIMSYVSHSQVWGLQENQRLYLGGRTNRAQLAFEQELVAIARELAPPSQTTAVDL.

3 helical membrane-spanning segments follow: residues 17-37 (LRLA…GTVI), 76-96 (TPWY…CTLT), and 162-182 (LGPI…ILGA).

It belongs to the Ccs1/CcsB family. May interact with CcsA.

The protein resides in the cellular thylakoid membrane. Required during biogenesis of c-type cytochromes (cytochrome c6 and cytochrome f) at the step of heme attachment. In Thermosynechococcus vestitus (strain NIES-2133 / IAM M-273 / BP-1), this protein is Cytochrome c biogenesis protein CcsB.